The following is a 179-amino-acid chain: Large ribosomal subunit protein uL5 (179 aa).

The protein belongs to the universal ribosomal protein uL5 family. Part of the 50S ribosomal subunit; part of the 5S rRNA/L5/L18/L25 subcomplex. Contacts the 5S rRNA and the P site tRNA. Forms a bridge to the 30S subunit in the 70S ribosome.

Its function is as follows. This is one of the proteins that bind and probably mediate the attachment of the 5S RNA into the large ribosomal subunit, where it forms part of the central protuberance. In the 70S ribosome it contacts protein S13 of the 30S subunit (bridge B1b), connecting the 2 subunits; this bridge is implicated in subunit movement. Contacts the P site tRNA; the 5S rRNA and some of its associated proteins might help stabilize positioning of ribosome-bound tRNAs. The sequence is that of Large ribosomal subunit protein uL5 from Halalkalibacterium halodurans (strain ATCC BAA-125 / DSM 18197 / FERM 7344 / JCM 9153 / C-125) (Bacillus halodurans).